Consider the following 1102-residue polypeptide: DNA-directed RNA polymerase subunit beta (1102 aa).

Residues 1081 to 1102 form a disordered region; sequence LPGKRTPSRPIYESLSTEGNQD.

This sequence belongs to the RNA polymerase beta chain family. In cyanobacteria the RNAP catalytic core is composed of 2 alpha, 1 beta, 1 beta', 1 gamma and 1 omega subunit. When a sigma factor is associated with the core the holoenzyme is formed, which can initiate transcription.

It carries out the reaction RNA(n) + a ribonucleoside 5'-triphosphate = RNA(n+1) + diphosphate. Its function is as follows. DNA-dependent RNA polymerase catalyzes the transcription of DNA into RNA using the four ribonucleoside triphosphates as substrates. The protein is DNA-directed RNA polymerase subunit beta of Trichodesmium erythraeum (strain IMS101).